We begin with the raw amino-acid sequence, 355 residues long: Sorbitol dehydrogenase (355 aa).

Ala2 carries the N-acetylalanine modification. Position 43 (Cys43) interacts with Zn(2+). Tyr49 is a substrate binding site. Positions 68 and 69 each coordinate Zn(2+). Glu154 is a substrate binding site. NAD(+) contacts are provided by residues Ile182, Asp202, Arg207, 271-273 (VGL), and 295-297 (IFR). Arg297 and Tyr298 together coordinate substrate.

This sequence belongs to the zinc-containing alcohol dehydrogenase family. In terms of assembly, homotetramer. Requires Zn(2+) as cofactor. In terms of tissue distribution, expressed in liver.

The protein localises to the mitochondrion membrane. Its subcellular location is the cell projection. It is found in the cilium. The protein resides in the flagellum. The enzyme catalyses keto-D-fructose + NADH + H(+) = D-sorbitol + NAD(+). Its function is as follows. Polyol dehydrogenase that catalyzes the reversible NAD(+)-dependent oxidation of various sugar alcohols. Is active with D-sorbitol (D-glucitol) as substrate, leading to the C2-oxidized product D-fructose. Is a key enzyme in the polyol pathway that interconverts glucose and fructose via sorbitol, which constitutes an important alternate route for glucose metabolism. This Gallus gallus (Chicken) protein is Sorbitol dehydrogenase (SORD).